An 858-amino-acid polypeptide reads, in one-letter code: Protein lines (858 aa).

Positions 1–102 (MDTSSAAGSG…NSPTTTPCSS (102 aa)) are disordered. Low complexity-rich tracts occupy residues 20–30 (STVATSTTSAS) and 65–102 (LDAN…PCSS).

Belongs to the protein lines family. In terms of assembly, interacts with drm. As to expression, expressed throughout the embryo, including the hindgut, posterior midgut and embryonic epidermis.

The protein localises to the cytoplasm. Its subcellular location is the nucleus. Has a dual role as a segment polarity protein and as a modulator of the Abd-B protein. Required for Abd-B to activate the transcription of genes (including ems, cut and sal) that are involved in posterior spiracle morphogenesis. Also required for Abd-B to form an eighth abdominal denticle belt. Acts in a hierarchy downstream of drm and upstream of bowl during foregut and hindgut patterning and morphogenesis. Involved in cell rearrangement during elongation of the embryonic hindgut. Required to regulate expression of embryonic hindgut patterning genes in order to establish the large intestine and at least some rectum, and to repress small intestine fate. Required for late wingless (wg)-dependent cell fate specification in the dorsal embryonic epidermis. Acts in concert with wg to regulate expression of wg itself and also to regulate wg-target genes. May have a role in ventral epidermal patterning, independent of wg signaling. This chain is Protein lines, found in Drosophila melanogaster (Fruit fly).